We begin with the raw amino-acid sequence, 1037 residues long: Sentrin-specific protease 7 (1037 aa).

Residues 1 to 10 (MDRARPGRRR) are compositionally biased toward basic residues. Disordered regions lie at residues 1-27 (MDRA…SSPA) and 185-399 (SDTA…ENSS). Phosphoserine occurs at positions 12, 13, and 25. A compositionally biased stretch (low complexity) spans 192-208 (SEQLSSSSDGSLESCQS). Over residues 272–282 (GTSNKNTSYSY) the composition is skewed to polar residues. Basic residues predominate over residues 290–300 (VSRKRKKRGRS). Composition is skewed to basic and acidic residues over residues 301–321 (NFHD…HTKE) and 328–341 (VSRK…DSHQ). A compositionally biased stretch (low complexity) spans 379-399 (ASSPNKSLESSASSEVSENSS). Residues Ser434 and Ser435 each carry the phosphoserine modification. Positions 747–1037 (LGVTNEDLEC…HLQQQKGGSC (291 aa)) are protease. The active site involves His847. The tract at residues 873–909 (QFQGQQSQHDHKMTDNDPHTTSTVSTSAEDSQSTEVN) is disordered. The segment covering 880–890 (QHDHKMTDNDP) has biased composition (basic and acidic residues). The segment covering 891–909 (HTTSTVSTSAEDSQSTEVN) has biased composition (polar residues). Asp926 is an active-site residue. Cys979 functions as the Nucleophile in the catalytic mechanism.

Belongs to the peptidase C48 family.

The protein localises to the cytoplasm. Its function is as follows. Protease that acts as a positive regulator of the cGAS-STING pathway by catalyzing desumoylation of CGAS. Desumoylation of CGAS promotes DNA-binding activity of CGAS, subsequent oligomerization and activation. Deconjugates SUMO2 and SUMO3 from targeted proteins, but not SUMO1. Catalyzes the deconjugation of poly-SUMO2 and poly-SUMO3 chains. Has very low efficiency in processing full-length SUMO proteins to their mature forms. The polypeptide is Sentrin-specific protease 7 (Mus musculus (Mouse)).